The chain runs to 66 residues: Conotoxin Cal6.38 (66 aa).

Residues 1–22 form the signal peptide; the sequence is MKLTFVLIVAVLVLAVCNFTVA. Cystine bridges form between Cys-38/Cys-55, Cys-45/Cys-59, and Cys-54/Cys-64.

It belongs to the conotoxin O1 superfamily. In terms of tissue distribution, expressed by the venom duct.

It localises to the secreted. Probable neurotoxin. This is Conotoxin Cal6.38 from Californiconus californicus (California cone).